Reading from the N-terminus, the 210-residue chain is Vacuolar protein sorting-associated protein 2 homolog 3 (210 aa).

The tract at residues 1 to 23 (MNIFTKKPNPREVLRESKREMTQ) is disordered. A compositionally biased stretch (basic and acidic residues) spans 9 to 23 (NPREVLRESKREMTQ). Residues 28 to 84 (IEKEIGSLQSEEKKLVLEIKRTAKSGNEGATKILARQLIRLRQQIANLQGSRAQMRG) are a coiled coil. Residues 178–200 (LSSAPKGKIGGKKAEDVGSSGID) are disordered.

The protein belongs to the SNF7 family. As to quaternary structure, component of the endosomal sorting required for transport complex III (ESCRT-III), composed at least of VPS2, VPS20, VPS24 and VPS32.

Its subcellular location is the endosome. In terms of biological role, component of the ESCRT-III complex, which is required for multivesicular bodies (MVBs) formation and sorting of endosomal cargo proteins into MVBs. The ESCRT-III complex is probably involved in the concentration of MVB cargo. The polypeptide is Vacuolar protein sorting-associated protein 2 homolog 3 (VPS2.3) (Arabidopsis thaliana (Mouse-ear cress)).